Here is a 420-residue protein sequence, read N- to C-terminus: Membrane protein UL43 homolog (420 aa).

11 consecutive transmembrane segments (helical) span residues 58 to 78, 81 to 101, 114 to 134, 157 to 177, 181 to 201, 203 to 223, 278 to 298, 312 to 332, 343 to 363, 364 to 384, and 399 to 419; these read IFSIAAHLAITLSCITLIQFI, KIIYINCTIYAITGFLIAFIV, IGKPAQFIFALISSIADTLIT, LMCFVMLGAFIASYHYVCLAT, LTWKAGFLILTAGTIIGISAP, GNISSLFGFLFLYTILAINVV, QIPMVVMSHATGVLIPVVIAL, TDMLQGVCGVLVGASVSIFIP, IIILLSIIGAMAITLAGFGLV, LGPTLFSACAAALSCYTCINI, and VVKSILGFIITSLLVCILVAL.

The protein belongs to the alphaherpesvirinae HHV-1 UL43 family.

Its subcellular location is the host membrane. The polypeptide is Membrane protein UL43 homolog (MDV056) (Gallus gallus (Chicken)).